Here is a 778-residue protein sequence, read N- to C-terminus: Probable dipeptidyl peptidase 4 (778 aa).

Positions 1–18 (MKTSQFLSLLLLAGIAQA) are cleaved as a signal peptide. N-linked (GlcNAc...) asparagine glycans are attached at residues Asn84, Asn114, and Asn222. Residues Ser616, Asp693, and His728 each act as charge relay system in the active site.

It belongs to the peptidase S9B family.

The protein localises to the secreted. The enzyme catalyses Release of an N-terminal dipeptide, Xaa-Yaa-|-Zaa-, from a polypeptide, preferentially when Yaa is Pro, provided Zaa is neither Pro nor hydroxyproline.. In terms of biological role, extracellular dipeptidyl-peptidase which removes N-terminal dipeptides sequentially from polypeptides having unsubstituted N-termini provided that the penultimate residue is proline. Contributes to pathogenicity. This chain is Probable dipeptidyl peptidase 4 (DPP4), found in Arthroderma benhamiae (strain ATCC MYA-4681 / CBS 112371) (Trichophyton mentagrophytes).